The sequence spans 335 residues: Urokinase plasminogen activator surface receptor (335 aa).

The N-terminal stretch at 1-22 (MGHPLLLPLLLLLHTCVPASWG) is a signal peptide. 3 UPAR/Ly6 domains span residues 23–114 (LRCM…RSRY), 115–213 (LECI…PQNG), and 214–305 (HQCY…YRKG). Disulfide bonds link cysteine 25–cysteine 46, cysteine 28–cysteine 34, and cysteine 39–cysteine 67. An N-linked (GlcNAc...) asparagine glycan is attached at asparagine 74. Intrachain disulfides connect cysteine 93/cysteine 98, cysteine 117/cysteine 144, cysteine 120/cysteine 127, cysteine 137/cysteine 169, cysteine 175/cysteine 192, cysteine 193/cysteine 198, cysteine 216/cysteine 244, cysteine 219/cysteine 227, cysteine 237/cysteine 263, cysteine 269/cysteine 287, and cysteine 288/cysteine 293. 4 N-linked (GlcNAc...) asparagine glycosylation sites follow: asparagine 184, asparagine 194, asparagine 222, and asparagine 255. Glycine 305 carries GPI-anchor amidated glycine lipidation. The propeptide at 306-335 (AAPQPGPAHLSLTITLLMTARLWGGTLLWT) is removed in mature form.

As to quaternary structure, monomer. Interacts (via the UPAR/Ly6 domains) with SRPX2. Interacts with MRC2. Interacts with FAP (seprase); the interaction occurs at the cell surface of invadopodia membrane. Interacts with SORL1 (via N-terminal ectodomain); this interaction decreases PLAUR internalization. The ternary complex composed of PLAUR-PLAU-SERPINE1 also interacts with SORL1.

It is found in the cell membrane. The protein resides in the cell projection. Its subcellular location is the invadopodium membrane. Functionally, acts as a receptor for urokinase plasminogen activator. Plays a role in localizing and promoting plasmin formation. Mediates the proteolysis-independent signal transduction activation effects of U-PA. It is subject to negative-feedback regulation by U-PA which cleaves it into an inactive form. The protein is Urokinase plasminogen activator surface receptor (PLAUR) of Chlorocebus aethiops (Green monkey).